The primary structure comprises 309 residues: Zinc transporter ZIP2 (309 aa).

The Extracellular portion of the chain corresponds to 1-8; sequence MEQLLGIK. A helical transmembrane segment spans residues 9-29; sequence LGCLFALLALTLGCGLTPICF. The Cytoplasmic segment spans residues 30–46; it reads KWFQIDAARGHHRLVLR. A helical membrane pass occupies residues 47–67; sequence LLGCISAGVFLGAGFMHMTAE. At 68–103 the chain is on the extracellular side; sequence ALEEIESQIQKFMVQNRSASERNSSGDADSAHMEYP. Residues 104–124 form a helical membrane-spanning segment; that stretch reads YGELIISLGFFFVFFLESLAL. Topologically, residues 125–164 are cytoplasmic; the sequence is QCCPGAAGGSTVQDEEWGGAHIFELHSHGHLPSPSKGPLR. The chain crosses the membrane as a helical span at residues 165–185; sequence ALVLLLSLSFHSVFEGLAVGL. Residues histidine 175 and glutamate 179 each coordinate Zn(2+). At 186–189 the chain is on the extracellular side; sequence QPTV. A helical transmembrane segment spans residues 190-210; that stretch reads AATVQLCLAVLAHKGLVVFGV. Histidine 202 provides a ligand contact to Zn(2+). At 211 to 224 the chain is on the cytoplasmic side; the sequence is GMRLVHLGTSSRWA. A helical membrane pass occupies residues 225-245; that stretch reads VFSILLLALMSPLGLAVGLAV. The Extracellular portion of the chain corresponds to 246–258; that stretch reads TGGDSEGGRGLAQ. Residues 259 to 279 traverse the membrane as a helical segment; it reads AVLEGVAAGTFLYVTFLEILP. Glutamate 276 contributes to the Zn(2+) binding site. Topologically, residues 280–288 are cytoplasmic; the sequence is RELASPEAP. Residues 289–309 traverse the membrane as a helical segment; that stretch reads LAKWSCVAAGFAFMAFIALWA.

This sequence belongs to the ZIP transporter (TC 2.A.5) family. Expressed only in prostate and uterine epithelial cells.

It is found in the cell membrane. The catalysed reaction is Zn(2+)(in) = Zn(2+)(out). It carries out the reaction Cd(2+)(in) = Cd(2+)(out). Its activity is regulated as follows. Activity is increased at acidic pH (6.5). Inhibited in the presence of high extracellular K(+). Transporter for the divalent cation Zn(2+). Mediates the influx of Zn(2+) into cells from extracellular space. The Zn(2+) uniporter activity is independent of H(+)-driving force, but is modulated by extracellular pH and membrane potential. Also transports other divalent cations Zn(2+), Cd2(+), Cu2(+), Co2(+) in the order of decreasing affinity, respectively. In the skin, aids in the differentiation of keratinocytes in the epidermis. The protein is Zinc transporter ZIP2 of Homo sapiens (Human).